The primary structure comprises 265 residues: RNA polymerase sigma factor SigI2 (265 aa).

The short motif at 71–84 (DEFSVGLAAFNEAI) is the Polymerase core binding element. A DNA-binding region (H-T-H motif) is located at residues 211-230 (KTELLKLLKINKKTIERNRT).

This sequence belongs to the sigma-70 factor family. SigI subfamily. Interacts with RsgI2.

It is found in the cytoplasm. With respect to regulation, negatively regulated by the anti-sigma-I factor RsgI2. Binding of the polysaccharide substrate to RsgI2 may lead to the release and activation of SigI2. Sigma factors are initiation factors that promote the attachment of RNA polymerase to specific initiation sites and are then released. This sigma factor is involved in regulation of cellulosomal genes via an external polysaccharide-sensing mechanism. This Acetivibrio thermocellus (strain ATCC 27405 / DSM 1237 / JCM 9322 / NBRC 103400 / NCIMB 10682 / NRRL B-4536 / VPI 7372) (Clostridium thermocellum) protein is RNA polymerase sigma factor SigI2.